The following is a 271-amino-acid chain: Ribosomal RNA small subunit methyltransferase A (271 aa).

S-adenosyl-L-methionine is bound by residues Asn19, Leu21, Gly46, Glu67, Asp92, and Asn114.

This sequence belongs to the class I-like SAM-binding methyltransferase superfamily. rRNA adenine N(6)-methyltransferase family. RsmA subfamily.

The protein localises to the cytoplasm. The catalysed reaction is adenosine(1518)/adenosine(1519) in 16S rRNA + 4 S-adenosyl-L-methionine = N(6)-dimethyladenosine(1518)/N(6)-dimethyladenosine(1519) in 16S rRNA + 4 S-adenosyl-L-homocysteine + 4 H(+). In terms of biological role, specifically dimethylates two adjacent adenosines (A1518 and A1519) in the loop of a conserved hairpin near the 3'-end of 16S rRNA in the 30S particle. May play a critical role in biogenesis of 30S subunits. This chain is Ribosomal RNA small subunit methyltransferase A, found in Aeromonas hydrophila subsp. hydrophila (strain ATCC 7966 / DSM 30187 / BCRC 13018 / CCUG 14551 / JCM 1027 / KCTC 2358 / NCIMB 9240 / NCTC 8049).